Consider the following 427-residue polypeptide: tRNA(Ile)-lysidine synthase (427 aa).

Residue 27–32 (SGGVDS) coordinates ATP.

Belongs to the tRNA(Ile)-lysidine synthase family.

The protein resides in the cytoplasm. It carries out the reaction cytidine(34) in tRNA(Ile2) + L-lysine + ATP = lysidine(34) in tRNA(Ile2) + AMP + diphosphate + H(+). Ligates lysine onto the cytidine present at position 34 of the AUA codon-specific tRNA(Ile) that contains the anticodon CAU, in an ATP-dependent manner. Cytidine is converted to lysidine, thus changing the amino acid specificity of the tRNA from methionine to isoleucine. The sequence is that of tRNA(Ile)-lysidine synthase from Streptococcus equi subsp. zooepidemicus (strain H70).